Reading from the N-terminus, the 127-residue chain is Protein pkiA (127 aa).

One can recognise an HIT domain in the interval Ile16 to Gly127.

This chain is Protein pkiA (pkiA), found in Dictyostelium discoideum (Social amoeba).